A 217-amino-acid polypeptide reads, in one-letter code: MEVIVPFSTERPKSRLSAVLTPDERAAFARTMLQDVLAAIDAADGEPRILATGAVGIDLPSPVEIDDRPLTDAVNAAIDARLGNDGAERVAVVMADLALATPNALRELFAAGREAEVAIAPGRGGGTNAFVAGHPAFRVDYHGASYLDHRRIADEIGAGVRVVDSHRLATDVDEPADLAELLIHAEADGDGGRAARWLRDAGFALDTTDGRVGVRRE.

Belongs to the CofC family. Homodimer.

It carries out the reaction (2S)-2-phospholactate + GTP + H(+) = (2S)-lactyl-2-diphospho-5'-guanosine + diphosphate. The protein operates within cofactor biosynthesis; coenzyme F420 biosynthesis. Its function is as follows. Guanylyltransferase that catalyzes the activation of (2S)-2-phospholactate (2-PL) as (2S)-lactyl-2-diphospho-5'-guanosine, via the condensation of 2-PL with GTP. It is involved in the biosynthesis of coenzyme F420, a hydride carrier cofactor. The chain is 2-phospho-L-lactate guanylyltransferase from Halorubrum lacusprofundi (strain ATCC 49239 / DSM 5036 / JCM 8891 / ACAM 34).